An 832-amino-acid chain; its full sequence is Translation initiation factor IF-2 (832 aa).

The interval 1-249 is disordered; it reads MSDDNDKPRT…GGGSSAPREK (249 aa). A compositionally biased stretch (pro residues) spans 53 to 71; the sequence is TPAPAPEPAPEPAPAPAPA. Residues 89–144 are compositionally biased toward basic and acidic residues; sequence PQERVARLQREAEEERLKLAEDARKRDDQKAKQNADDEKKRQEENKKAEEEAEKQA. Over residues 145-156 the composition is skewed to low complexity; the sequence is AAEAEAAAAAEA. Basic and acidic residues predominate over residues 180–200; sequence PEPKRPEKKKEEKKPARGGAK. Positions 333–503 constitute a tr-type G domain; it reads PRPPVVTIMG…ELQAELLELK (171 aa). The interval 342 to 349 is G1; it reads GHVDHGKT. 342–349 is a GTP binding site; the sequence is GHVDHGKT. The interval 367–371 is G2; that stretch reads GITQH. The interval 389-392 is G3; sequence DTPG. Residues 389-393 and 443-446 each bind GTP; these read DTPGH and NKCD. The segment at 443-446 is G4; that stretch reads NKCD. The tract at residues 479–481 is G5; that stretch reads SAT.

It belongs to the TRAFAC class translation factor GTPase superfamily. Classic translation factor GTPase family. IF-2 subfamily.

The protein resides in the cytoplasm. In terms of biological role, one of the essential components for the initiation of protein synthesis. Protects formylmethionyl-tRNA from spontaneous hydrolysis and promotes its binding to the 30S ribosomal subunits. Also involved in the hydrolysis of GTP during the formation of the 70S ribosomal complex. The polypeptide is Translation initiation factor IF-2 (Erythrobacter litoralis (strain HTCC2594)).